A 780-amino-acid polypeptide reads, in one-letter code: Subtilisin-like protease SBT1.3 (780 aa).

A signal peptide spans Met1 to Ala25. The propeptide at Glu26 to His120 is activation peptide. Positions Thr36 to His120 constitute an Inhibitor I9 domain. A Peptidase S8 domain is found at Arg116–Thr628. The active-site Charge relay system is Asp154. An N-linked (GlcNAc...) asparagine glycan is attached at Asn165. His227 acts as the Charge relay system in catalysis. A PA domain is found at Lys384 to Gln477. N-linked (GlcNAc...) asparagine glycosylation occurs at Asn394. Ser560 (charge relay system) is an active-site residue. N-linked (GlcNAc...) asparagine glycosylation is found at Asn663 and Asn731.

The protein belongs to the peptidase S8 family.

The protein resides in the secreted. This is Subtilisin-like protease SBT1.3 from Arabidopsis thaliana (Mouse-ear cress).